The primary structure comprises 200 residues: 3-isopropylmalate dehydratase small subunit (200 aa).

It belongs to the LeuD family. LeuD type 1 subfamily. Heterodimer of LeuC and LeuD.

The enzyme catalyses (2R,3S)-3-isopropylmalate = (2S)-2-isopropylmalate. It participates in amino-acid biosynthesis; L-leucine biosynthesis; L-leucine from 3-methyl-2-oxobutanoate: step 2/4. In terms of biological role, catalyzes the isomerization between 2-isopropylmalate and 3-isopropylmalate, via the formation of 2-isopropylmaleate. This Vibrio parahaemolyticus serotype O3:K6 (strain RIMD 2210633) protein is 3-isopropylmalate dehydratase small subunit.